Consider the following 99-residue polypeptide: Duplicate procyclin (99 aa).

The sequence is that of Duplicate procyclin from Trypanosoma brucei brucei.